Here is a 124-residue protein sequence, read N- to C-terminus: Ribonuclease pancreatic (124 aa).

Residues 1–13 are compositionally biased toward basic and acidic residues; sequence SETAAEKFERQHM. Positions 1 to 23 are disordered; it reads SETAAEKFERQHMDSYSSSSSNS. Positions 7 and 10 each coordinate substrate. Residue histidine 12 is the Proton acceptor of the active site. 4 cysteine pairs are disulfide-bonded: cysteine 26–cysteine 84, cysteine 40–cysteine 95, cysteine 58–cysteine 110, and cysteine 65–cysteine 72. Substrate is bound by residues 41–45, lysine 66, and arginine 85; that span reads KPVNT. Residue histidine 119 is the Proton donor of the active site.

It belongs to the pancreatic ribonuclease family. As to quaternary structure, monomer. Interacts with and forms tight 1:1 complexes with RNH1. Dimerization of two such complexes may occur. Interaction with RNH1 inhibits this protein. In terms of tissue distribution, pancreas.

The protein resides in the secreted. The catalysed reaction is an [RNA] containing cytidine + H2O = an [RNA]-3'-cytidine-3'-phosphate + a 5'-hydroxy-ribonucleotide-3'-[RNA].. It catalyses the reaction an [RNA] containing uridine + H2O = an [RNA]-3'-uridine-3'-phosphate + a 5'-hydroxy-ribonucleotide-3'-[RNA].. Functionally, endonuclease that catalyzes the cleavage of RNA on the 3' side of pyrimidine nucleotides. Acts on single-stranded and double-stranded RNA. In Camelus bactrianus (Bactrian camel), this protein is Ribonuclease pancreatic (RNASE1).